Reading from the N-terminus, the 162-residue chain is Lipoprotein signal peptidase (162 aa).

Helical transmembrane passes span 12 to 32 (WFAL…YFNS), 42 to 62 (VVEG…FSFL), 66 to 86 (GGWQ…WLGW), and 93 to 113 (FSGL…GNVI). Active-site residues include D123 and D142. Residues 133–153 (WYYPAFNLADSFICVGAALMV) traverse the membrane as a helical segment.

Belongs to the peptidase A8 family.

It is found in the cell inner membrane. The catalysed reaction is Release of signal peptides from bacterial membrane prolipoproteins. Hydrolyzes -Xaa-Yaa-Zaa-|-(S,diacylglyceryl)Cys-, in which Xaa is hydrophobic (preferably Leu), and Yaa (Ala or Ser) and Zaa (Gly or Ala) have small, neutral side chains.. The protein operates within protein modification; lipoprotein biosynthesis (signal peptide cleavage). In terms of biological role, this protein specifically catalyzes the removal of signal peptides from prolipoproteins. The polypeptide is Lipoprotein signal peptidase (Chromobacterium violaceum (strain ATCC 12472 / DSM 30191 / JCM 1249 / CCUG 213 / NBRC 12614 / NCIMB 9131 / NCTC 9757 / MK)).